Consider the following 227-residue polypeptide: MSSQGITLWPDTLAPREKLLRYGASALSDAELLAIFLRTGFPGVHVMQLAEQLLEQFGSLYHLMSADHSVFCSHKGLGNSSYSQLQAISELAFRFFSSHLAQENAMLNPRMTQHYLQSLLVHHEREVFLVLFLDNQHRVIRHQEMFAGTISSVVVYPREIVREALKANAAAIILAHNHPSGKAEPSHADRLITEQVVNACLLLEIRVLDHLVIGRGECVSFAERGWL.

The 123-residue stretch at alanine 105–leucine 227 folds into the MPN domain. The Zn(2+) site is built by histidine 176, histidine 178, and aspartate 189. A JAMM motif motif is present at residues histidine 176–aspartate 189.

The protein belongs to the UPF0758 family. YicR subfamily.

The protein is UPF0758 protein Spro_4842 of Serratia proteamaculans (strain 568).